The sequence spans 757 residues: Voltage-gated potassium channel KCNC3 (757 aa).

The interval 1–78 (MLSSVCVSSF…CPGLPAAAMG (78 aa)) is important for normal N-type inactivation. Residues 1–87 (MLSSVCVSSF…GRHGGGGGDS (87 aa)) form a disordered region. The Cytoplasmic segment spans residues 1–290 (MLSSVCVSSF…EDPYSSRAAR (290 aa)). Residues 21 to 40 (PAPPPQPPESPPPPPLPPQQ) are compositionally biased toward pro residues. The segment covering 41–52 (QQPAQPGPAASP) has biased composition (low complexity). Zn(2+) contacts are provided by histidine 157, cysteine 163, cysteine 184, and cysteine 185. Residues 210 to 219 (AANAANAAGA) show a composition bias toward low complexity. A disordered region spans residues 210 to 232 (AANAANAAGAHDGGLDDEAGAGG). The helical transmembrane segment at 291 to 309 (YVAFASLFFILISITTFCL) threads the bilayer. N-linked (GlcNAc...) asparagine glycosylation is found at asparagine 320 and asparagine 336. Residues 351–370 (VEGVCVVWFTFEFLMRITFC) form a helical membrane-spanning segment. Residues 371-379 (PDKVEFLKS) lie on the Cytoplasmic side of the membrane. A helical transmembrane segment spans residues 380-398 (SLNIIDCVAILPFYLEVGL). Residues 412-434 (FLRVVRFVRILRIFKLTRHFVGL) form a helical; Voltage-sensor membrane-spanning segment. The Cytoplasmic portion of the chain corresponds to 435–447 (RVLGHTLRASTNE). Residues 448–469 (FLLLIIFLALGVLIFATMIYYA) form a helical membrane-spanning segment. The N-linked (GlcNAc...) asparagine glycan is linked to asparagine 483. 4 residues coordinate K(+): threonine 503, leucine 504, glycine 505, and tyrosine 506. Positions 503–508 (TLGYGD) match the Selectivity filter motif. Residues 518–539 (LVGALCALAGVLTIAMPVPVIV) traverse the membrane as a helical segment. Over 540–757 (NNFGMYYSLA…NANAAAWISP (218 aa)) the chain is Cytoplasmic. The segment at 556-613 (PKKKNKHIPRPPQPGSPNYCKPDPPPPPPPHPHHGSGGISPPPPITPPSMGVTVAGAY) is disordered. Arginine 625 is modified (omega-N-methylarginine). The disordered stretch occupies residues 682–746 (QPAMSPEDKS…KPGPPSFLPD (65 aa)). Serine 686 and serine 691 each carry phosphoserine. Residues 728–743 (PPLPPQDWRKPGPPSF) are compositionally biased toward pro residues.

Belongs to the potassium channel family. C (Shaw) (TC 1.A.1.2) subfamily. Kv3.3/KCNC3 sub-subfamily. As to quaternary structure, homotetramer. Heterotetramer with KCNC1. Interacts (via C-terminus) with HAX1; this interaction modulates channel gating. Identified in a complex with ACTR3, a subunit of the Arp2/3 complex; this interaction is indirect and depends on the presence of HAX1. In terms of processing, N-glycosylated.

The protein resides in the cell membrane. It localises to the presynaptic cell membrane. Its subcellular location is the perikaryon. It is found in the cell projection. The protein localises to the axon. The protein resides in the dendrite. It localises to the dendritic spine membrane. Its subcellular location is the cytoplasm. It is found in the cell cortex. The protein localises to the cytoskeleton. It catalyses the reaction K(+)(in) = K(+)(out). Its function is as follows. Voltage-gated potassium channel that plays an important role in the rapid repolarization of fast-firing brain neurons. The channel opens in response to the voltage difference across the membrane, forming a potassium-selective channel through which potassium ions pass in accordance with their electrochemical gradient. The channel displays rapid activation and inactivation kinetics. It plays a role in the regulation of the frequency, shape and duration of action potentials in Purkinje cells. Required for normal survival of cerebellar neurons, probably via its role in regulating the duration and frequency of action potentials that in turn regulate the activity of voltage-gated Ca(2+) channels and cellular Ca(2+) homeostasis. Required for normal motor function. Plays a role in the reorganization of the cortical actin cytoskeleton and the formation of actin veil structures in neuronal growth cones via its interaction with HAX1 and the Arp2/3 complex. The polypeptide is Voltage-gated potassium channel KCNC3 (KCNC3) (Homo sapiens (Human)).